Here is a 217-residue protein sequence, read N- to C-terminus: Large ribosomal subunit protein uL3 (217 aa).

Residues 137–160 are disordered; sequence VSASHGSHRNHRKPGSIGASSTPS.

The protein belongs to the universal ribosomal protein uL3 family. As to quaternary structure, part of the 50S ribosomal subunit. Forms a cluster with proteins L14 and L19.

In terms of biological role, one of the primary rRNA binding proteins, it binds directly near the 3'-end of the 23S rRNA, where it nucleates assembly of the 50S subunit. The chain is Large ribosomal subunit protein uL3 from Clavibacter sepedonicus (Clavibacter michiganensis subsp. sepedonicus).